The chain runs to 1231 residues: Chromosome-associated kinesin KIF4 (1231 aa).

A Kinesin motor domain is found at 9–337 (PVRVALRCRP…LRYADRARKI (329 aa)). 88 to 95 (GQTGSGKT) lines the ATP pocket. Residues 351 to 1000 (ELNHLKQQVQ…IKQKLTLLQV (650 aa)) adopt a coiled-coil conformation. Residue serine 395 is modified to Phosphoserine. Threonine 800 bears the Phosphothreonine mark. Phosphoserine is present on residues serine 802, serine 811, and serine 816. The segment at 1001–1231 (ASKQKPHLTR…GCSPIQEESH (231 aa)) is globular. A disordered region spans residues 1189 to 1212 (HPELKSIASESQENKAIGKKKKRA). 2 positions are modified to phosphoserine: serine 1224 and serine 1230.

It belongs to the TRAFAC class myosin-kinesin ATPase superfamily. Kinesin family. Chromokinesin subfamily. Requires [2Fe-2S] cluster as cofactor. It depends on [4Fe-4S] cluster as a cofactor. In terms of tissue distribution, expressed in pyramidal cells in juvenile hippocampus, granular cells in juvenile cerebellar cortex and in adult spleen.

It localises to the nucleus. The protein resides in the chromosome. It is found in the cytoplasm. The protein localises to the cytoskeleton. In terms of biological role, iron-sulfur (Fe-S) cluster binding motor protein that has a role in chromosome segregation during mitosis. Required for mitotic chromosomal positioning and bipolar spindle stabilization. The protein is Chromosome-associated kinesin KIF4 (Kif4) of Mus musculus (Mouse).